We begin with the raw amino-acid sequence, 385 residues long: Prostacyclin receptor (385 aa).

Residues 1–16 lie on the Extracellular side of the membrane; sequence MADSCRNLTYVRDSVG. Disulfide bonds link C5/C165 and C92/C170. N7 carries an N-linked (GlcNAc...) asparagine glycan. The helical transmembrane segment at 17–38 threads the bilayer; that stretch reads PATSTLMFVAGVVGNGLALGIL. The Cytoplasmic segment spans residues 39–51; sequence GARRHSRPSAFAV. The helical transmembrane segment at 52–76 threads the bilayer; it reads LVTGLGVTDLLGTCFLSPAVFAAYA. At 77–94 the chain is on the extracellular side; sequence RNSSLLGLARGRPALCDA. Residues 95–115 form a helical membrane-spanning segment; the sequence is FAFAMTFFGLASTLILFAMAV. Residues 116–134 are Cytoplasmic-facing; the sequence is ERCLALSHPYLYAQLDGPR. The helical transmembrane segment at 135–158 threads the bilayer; it reads RARLALPAIYAFCTIFCSLPFLGL. The Extracellular segment spans residues 159 to 181; it reads GQHQQYCPGSWCFIRMRSAEPGG. A helical transmembrane segment spans residues 182-208; that stretch reads CAFLLAYASLVALLVAAIVLCNGSVTL. Residues 209-234 lie on the Cytoplasmic side of the membrane; sequence SLCRMYRQQRRHQARCPRPRAGEDEV. The helical transmembrane segment at 235–259 threads the bilayer; it reads DHLILLALMTGIMAVCSLPLTPQIR. The Extracellular segment spans residues 260-273; sequence GFTQAIAPDSSEMG. The helical transmembrane segment at 274–294 threads the bilayer; that stretch reads DLLAFRFNAFNPILDPWVFIL. The Cytoplasmic segment spans residues 295-385; the sequence is FRKSVFQRLK…AGSEAACSLC (91 aa). The tract at residues 315 to 344 is disordered; the sequence is AQGDSRTSLSQSASGRKDSSAPPALEGKKG. A compositionally biased stretch (polar residues) spans 318 to 328; sequence DSRTSLSQSAS. C382 carries the post-translational modification Cysteine methyl ester. C382 carries S-farnesyl cysteine lipidation. The propeptide at 383-385 is removed in mature form; the sequence is SLC.

This sequence belongs to the G-protein coupled receptor 1 family. In terms of assembly, interacts (non-isoprenylated C-terminus) with PDZK1. Post-translationally, isoprenylation does not influence ligand binding but is required for efficient coupling to the effectors adenylyl cyclase and phospholipase C.

The protein resides in the cell membrane. Receptor for prostacyclin (prostaglandin I2 or PGI2). The activity of this receptor is mediated by G(s) proteins which activate adenylate cyclase. This is Prostacyclin receptor (PTGIR) from Bos taurus (Bovine).